Reading from the N-terminus, the 1113-residue chain is uncharacterized protein (1113 aa).

ATP is bound at residue 313 to 320; it reads GPPGTGKS.

This sequence belongs to the DNA2/NAM7 helicase family.

This is an uncharacterized protein from Mycoplasma pneumoniae (strain ATCC 29342 / M129 / Subtype 1) (Mycoplasmoides pneumoniae).